The primary structure comprises 59 residues: Temporin-HN2 (59 aa).

The signal sequence occupies residues 1-22 (MFTLKKSLLLLLFLGTINLSLS). Residues 16-44 (TINLSLSEQERDAKEERRDEMDVEVEKRN) adopt a coiled-coil conformation. Residues 23-41 (EQERDAKEERRDEMDVEVE) constitute a propeptide that is removed on maturation. Leu57 carries the leucine amide modification.

As to expression, expressed by the skin glands.

It is found in the secreted. Has antimicrobial activity against some Gram-positive bacteria and fungi but has no activity against a range of Gram-negative bacteria except P.faecalis. Active against the Gram-positive bacteria S.aureus ATCC 25923 (MIC=4.8 uM), S.carnosus KHS (MIC=19 uM), B.licheniformis X39 (MIC=19 uM) and R.rhodochrous X15 (MIC=2.4 uM) but is inactive against E.faecium 091299 and E.faecalis 981. Has a less potent antimicrobial activity against the Gram-negative bacterium P.faecalis X29 (MIC=37.5 uM) and is inactive against E.coli, P.aeruginosa and S.typhi. Has antifungal activity against C.albicans ATCC 2002 (MIC=9.5 uM) and is also active against the slime mold 090223 (MIC=9.5 uM). Has extremely low hemolytic activity against human erythrocytes (LC(50)=300 uM). The protein is Temporin-HN2 of Odorrana hainanensis (Odor frog).